The sequence spans 239 residues: Lactate utilization protein A (239 aa).

The protein belongs to the LutA/YkgE family.

Its function is as follows. Is involved in L-lactate degradation and allows cells to grow with lactate as the sole carbon source. The protein is Lactate utilization protein A of Geobacillus thermodenitrificans (strain NG80-2).